The primary structure comprises 706 residues: UvrABC system protein C (706 aa).

The 80-residue stretch at V16 to V95 folds into the GIY-YIG domain. In terms of domain architecture, UVR spans D208 to A243. The segment at A651–V706 is disordered. Residues T692–V706 are compositionally biased toward polar residues.

This sequence belongs to the UvrC family. As to quaternary structure, interacts with UvrB in an incision complex.

It is found in the cytoplasm. Functionally, the UvrABC repair system catalyzes the recognition and processing of DNA lesions. UvrC both incises the 5' and 3' sides of the lesion. The N-terminal half is responsible for the 3' incision and the C-terminal half is responsible for the 5' incision. The sequence is that of UvrABC system protein C from Mycolicibacterium smegmatis (strain ATCC 700084 / mc(2)155) (Mycobacterium smegmatis).